The following is a 658-amino-acid chain: MPLFDLKSPYSLAGDQPQAIDTLTKSLKNKNHYQTLVGVTGSGKTYTMANIIAQTNKPTLIMSHNKTLCAQLYSEFKAFFPHNRVEYFISHFDYYQPESYIPRRDLFIEKDSSINDDLERLRLSATTSLLGYDDVIVIASVSANYGLGNPEEYLKVMEKIKVGEKRAYKSFLLKLVEMGYSRNEVVFDRGSFRAMGECVDIFPAYNDAEFIRIEFFGDEIERIAVFDALERNEIKRLDSVMLYAASQFAVGSERLNLAIKSIEDELALRLKFFKEQDKILEYNRLKQRTEHDLEMISATGVCKGIENYARHFTGKAPNETPFCLFDYLGIFEREFLVIVDESHVSLPQFGGMYAGDMSRKSVLVEYGFRLPSALDNRPLKFDEFIHKNCQFLFVSATPNKLELELSKKNVAEQIIRPTGLLDPKFEVRDSDKQVQDLFDEIKLVVARDERVLITTLTKKMAEELCKYYAEWGLKVRYMHSEIDAIERNHIIRSLRLKEFDVLIGINLLREGLDLPEVSLVAIMDADKEGFLRSETSLIQTMGRAARNANGKVLLYAKKITQSMQKAFETTTYRRAKQEEFNKLHNITPKTVTRALEEELKLRDDETKIAKALKKDKIPKSEREKIIKELDKKMRECAKNLDFEEAMHLRDEIAKLRTL.

The Helicase ATP-binding domain occupies 25-178; that stretch reads KSLKNKNHYQ…KSFLLKLVEM (154 aa). 38 to 45 contacts ATP; it reads GVTGSGKT. The Beta-hairpin signature appears at 91-114; it reads HFDYYQPESYIPRRDLFIEKDSSI. Residues 433–607 form the Helicase C-terminal domain; that stretch reads QVQDLFDEIK…ELKLRDDETK (175 aa). Residues 623–658 form the UVR domain; sequence EKIIKELDKKMRECAKNLDFEEAMHLRDEIAKLRTL.

Belongs to the UvrB family. Forms a heterotetramer with UvrA during the search for lesions. Interacts with UvrC in an incision complex.

The protein localises to the cytoplasm. Its function is as follows. The UvrABC repair system catalyzes the recognition and processing of DNA lesions. A damage recognition complex composed of 2 UvrA and 2 UvrB subunits scans DNA for abnormalities. Upon binding of the UvrA(2)B(2) complex to a putative damaged site, the DNA wraps around one UvrB monomer. DNA wrap is dependent on ATP binding by UvrB and probably causes local melting of the DNA helix, facilitating insertion of UvrB beta-hairpin between the DNA strands. Then UvrB probes one DNA strand for the presence of a lesion. If a lesion is found the UvrA subunits dissociate and the UvrB-DNA preincision complex is formed. This complex is subsequently bound by UvrC and the second UvrB is released. If no lesion is found, the DNA wraps around the other UvrB subunit that will check the other stand for damage. This is UvrABC system protein B from Helicobacter acinonychis (strain Sheeba).